The following is an 803-amino-acid chain: Leucine--tRNA ligase (803 aa).

The 'HIGH' region signature appears at 40–51; sequence PYPSGAGLHVGH. The 'KMSKS' region motif lies at 575-579; that stretch reads KMSKS. Lysine 578 is an ATP binding site.

This sequence belongs to the class-I aminoacyl-tRNA synthetase family.

Its subcellular location is the cytoplasm. The enzyme catalyses tRNA(Leu) + L-leucine + ATP = L-leucyl-tRNA(Leu) + AMP + diphosphate. The chain is Leucine--tRNA ligase from Listeria welshimeri serovar 6b (strain ATCC 35897 / DSM 20650 / CCUG 15529 / CIP 8149 / NCTC 11857 / SLCC 5334 / V8).